The chain runs to 473 residues: Inactive levansucrase (473 aa).

An N-terminal signal peptide occupies residues 1-29; it reads MNIKKFAKQATVLTFTTALLAGGATQAFA.

The protein belongs to the glycosyl hydrolase 68 family.

The protein resides in the secreted. This chain is Inactive levansucrase (sacB), found in Geobacillus stearothermophilus (Bacillus stearothermophilus).